Here is a 175-residue protein sequence, read N- to C-terminus: Co-chaperone protein HscB homolog (175 aa).

The J domain occupies 2-74; that stretch reads NYFQLFNIEV…LQRAEYILVQ (73 aa).

Belongs to the HscB family. Interacts with HscA and stimulates its ATPase activity.

Its function is as follows. Co-chaperone involved in the maturation of iron-sulfur cluster-containing proteins. Seems to help targeting proteins to be folded toward HscA. The polypeptide is Co-chaperone protein HscB homolog (Colwellia psychrerythraea (strain 34H / ATCC BAA-681) (Vibrio psychroerythus)).